Here is a 1117-residue protein sequence, read N- to C-terminus: Protein ECM21 (1117 aa).

2 disordered regions span residues 1–48 (MPFI…RRSS) and 63–155 (VHSP…YSQI). The span at 11-34 (KNSSHSLSETDLNQSKGQPFQPSP) shows a compositional bias: polar residues. Residue Ser18 is modified to Phosphoserine. Over residues 70–81 (NNTTKGGNNNGN) the composition is skewed to low complexity. Residue Ser115 is modified to Phosphoserine. Positions 117–130 (SDSATTTPRSSTSD) are enriched in low complexity. Ser140 bears the Phosphoserine mark. Residue Lys191 forms a Glycyl lysine isopeptide (Lys-Gly) (interchain with G-Cter in ubiquitin) linkage. Disordered regions lie at residues 275–312 (ATTAAATESGGSINENRDTLLRENNSGDHPGSGSELNT) and 486–523 (YRQDSNSPQPIVSPDSSSSLSSTTSSLKLTETESAQAH). At Ser286 the chain carries Phosphoserine. The span at 501 to 519 (SSSSLSSTTSSLKLTETES) shows a compositional bias: low complexity. Ser527 and Ser550 each carry phosphoserine. Residues Lys577, Lys651, and Lys712 each participate in a glycyl lysine isopeptide (Lys-Gly) (interchain with G-Cter in ubiquitin) cross-link. The residue at position 775 (Ser775) is a Phosphoserine. Residues Lys794, Lys807, and Lys1024 each participate in a glycyl lysine isopeptide (Lys-Gly) (interchain with G-Cter in ubiquitin) cross-link. Disordered stretches follow at residues 1016–1065 (RSRF…KDKQ) and 1079–1117 (KDDEEQEGIVSSSSADSLLSHGNEPPRYDEIVPLMSDEE). Positions 1027-1059 (STPSPVNRSHNSSPTNGLSQANGTVRIPNATTE) are enriched in polar residues. Phosphoserine is present on Ser1035. Over residues 1089 to 1098 (SSSSADSLLS) the composition is skewed to low complexity.

The protein belongs to the CSR2 family.

It is found in the cytoplasm. In terms of biological role, may be involved in cell wall organization and biogenesis. The protein is Protein ECM21 (ECM21) of Saccharomyces cerevisiae (strain ATCC 204508 / S288c) (Baker's yeast).